A 90-amino-acid polypeptide reads, in one-letter code: Probable Fe(2+)-trafficking protein (90 aa).

The protein belongs to the Fe(2+)-trafficking protein family.

In terms of biological role, could be a mediator in iron transactions between iron acquisition and iron-requiring processes, such as synthesis and/or repair of Fe-S clusters in biosynthetic enzymes. The polypeptide is Probable Fe(2+)-trafficking protein (Vibrio parahaemolyticus serotype O3:K6 (strain RIMD 2210633)).